A 262-amino-acid polypeptide reads, in one-letter code: Glutamate 5-kinase (262 aa).

Residue lysine 14 coordinates ATP. Positions 54, 141, and 153 each coordinate substrate. Residues serine 173 to aspartate 174 and threonine 214 to lysine 220 contribute to the ATP site.

The protein belongs to the glutamate 5-kinase family.

It localises to the cytoplasm. It catalyses the reaction L-glutamate + ATP = L-glutamyl 5-phosphate + ADP. The protein operates within amino-acid biosynthesis; L-proline biosynthesis; L-glutamate 5-semialdehyde from L-glutamate: step 1/2. Catalyzes the transfer of a phosphate group to glutamate to form L-glutamate 5-phosphate. The polypeptide is Glutamate 5-kinase (Symbiobacterium thermophilum (strain DSM 24528 / JCM 14929 / IAM 14863 / T)).